A 300-amino-acid chain; its full sequence is CDAN1-interacting nuclease 1 (300 aa).

It is found in the nucleus. Its subcellular location is the cytoplasm. Its function is as follows. May play a role in erythroid cell differentiation. This chain is CDAN1-interacting nuclease 1 (cdin1), found in Danio rerio (Zebrafish).